Consider the following 542-residue polypeptide: Cytochrome P450 monooxygenase TRI1 (542 aa).

A helical transmembrane segment spans residues Leu-37–Leu-54. N-linked (GlcNAc...) asparagine glycosylation is found at Asn-167, Asn-297, and Asn-428. Cys-469 contributes to the heme binding site.

This sequence belongs to the cytochrome P450 family. The cofactor is heme.

The protein localises to the membrane. It participates in sesquiterpene biosynthesis; trichothecene biosynthesis. In terms of biological role, cytochrome P450 monooxygenase; part of 2-gene cluster involved in trichothecene C-8 modification that mediates the biosynthesis of T2-toxin. The biosynthesis of trichothecenes begins with the cyclization of farnesyl diphosphate to trichodiene and is catalyzed by the trichodiene synthase TRI5. Trichodiene undergoes a series of oxygenations catalyzed by the cytochrome P450 monooxygenase TRI4. TRI4 controls the addition of four oxygens at C-2, C-3, C-11, and the C-12, C-13-epoxide to form the intermediate isotrichotriol. Isotrichotriol then undergoes a non-enzymatic isomerization and cyclization to form isotrichodermol. During this process, the oxygen at the C-2 position becomes the pyran ring oxygen and the hydroxyl group at C-11 is lost. More complex type A trichothecenes are built by modifying isotrichodermol through a series of paired hydroxylation and acetylation or acylation steps. Isotrichodermol is converted to isotrichodermin by the acetyltransferase TRI101. TRI101 encodes a C-3 transacetylase that acts as a self-protection or resistance factor during biosynthesis and that the presence of a free C-3 hydroxyl group is a key component of Fusarium trichothecene phytotoxicity. A second hydroxyl group is added to C-15 by the trichothecene C-15 hydroxylase TRI11, producing 15-decalonectrin, which is then acetylated by TRI3, producing calonectrin. A third hydroxyl group is added at C-4 by the cytochrome P450 monooxygenase TRI13, converting calonectrin to 3,15-diacetoxyspirpenol, which is subsequently acetylated by the acetyltransferase TRI7. A fourth hydroxyl group is added to C-8 by the cytochrome P450 monooxygenase TRI1, followed by the addition of an isovaleryl moiety by TRI16. Finally, the acetyl group is removed from the C-3 position by the trichothecene C-3 esterase TRI8 to produce T-2 toxin. In Fusarium sporotrichioides, this protein is Cytochrome P450 monooxygenase TRI1.